The sequence spans 215 residues: Thymidylate kinase (215 aa).

7–14 (GMEGSGKS) contributes to the ATP binding site.

The protein belongs to the thymidylate kinase family.

It carries out the reaction dTMP + ATP = dTDP + ADP. In terms of biological role, phosphorylation of dTMP to form dTDP in both de novo and salvage pathways of dTTP synthesis. The sequence is that of Thymidylate kinase from Nitratidesulfovibrio vulgaris (strain DSM 19637 / Miyazaki F) (Desulfovibrio vulgaris).